The primary structure comprises 367 residues: Spermidine/putrescine import ATP-binding protein PotA (367 aa).

The 231-residue stretch at 10–240 (IEFKNVSLDY…PINHFVANFI (231 aa)) folds into the ABC transporter domain. 42–49 (GPSGSGKS) contacts ATP.

It belongs to the ABC transporter superfamily. Spermidine/putrescine importer (TC 3.A.1.11.1) family. The complex is composed of two ATP-binding proteins (PotA), two transmembrane proteins (PotB and PotC) and a solute-binding protein (PotD).

It is found in the cell membrane. The enzyme catalyses ATP + H2O + polyamine-[polyamine-binding protein]Side 1 = ADP + phosphate + polyamineSide 2 + [polyamine-binding protein]Side 1.. Functionally, part of the ABC transporter complex PotABCD involved in spermidine/putrescine import. Responsible for energy coupling to the transport system. The chain is Spermidine/putrescine import ATP-binding protein PotA from Oenococcus oeni (strain ATCC BAA-331 / PSU-1).